The primary structure comprises 219 residues: DAN domain family member 5 (219 aa).

An N-terminal signal peptide occupies residues 1–19; that stretch reads MLLFRAASLLPLLCFTVGA. 4 disulfides stabilise this stretch: C118/C165, C132/C179, C142/C195, and C146/C197. In terms of domain architecture, CTCK spans 118-198; it reads CHALPFIQNV…VELVEECECE (81 aa).

Belongs to the DAN family. In terms of assembly, interacts with nr1-a.

Its subcellular location is the secreted. Its function is as follows. Plays an important role in regulating the left-right axis by blocking a tgfb1 cascade in the right posterior paraxial mesoderm. Functions as an inhibitor of bmp, tgfb1, nodal, activin and wnt signaling in the ectoderm. May inhibit mesodermal signals, probably through an inhibition of nodal/activin pathways. Seems to regulates cell fate specification and competence before the onset of neural induction. Expression in the entire ectodermal region prior to gastrulation might act to prevent fate specification in the ectoderm and ensure the maintenance of the stem-cell-like properties exhibited by ectodermal cells. The protein is DAN domain family member 5 (dand5) of Xenopus tropicalis (Western clawed frog).